The sequence spans 53 residues: EDLQGDAVPETSATKDDNEXPEMIPMSLPPELEINKPFILIIYDDNTKSPLFV.

The disordered stretch occupies residues 1–28 (EDLQGDAVPETSATKDDNEXPEMIPMSL).

It belongs to the serpin family. N-glycosylated; contains biantennary glycans. Plasma.

It localises to the secreted. The protein is Alpha-1-antiproteinase 1 of Equus caballus (Horse).